Here is a 498-residue protein sequence, read N- to C-terminus: GTPase Der (498 aa).

EngA-type G domains follow at residues 3 to 166 and 212 to 385; these read PVVA…FEEL and IKFA…RSAT. GTP is bound by residues 9–16, 56–60, 118–121, 218–225, 265–269, and 330–333; these read GRPNVGKS, DTGGI, NKTD, DTAGV, and NKWD. One can recognise a KH-like domain in the interval 386 to 470; the sequence is KRISTSMLTR…PIHIEFQEGD (85 aa).

This sequence belongs to the TRAFAC class TrmE-Era-EngA-EngB-Septin-like GTPase superfamily. EngA (Der) GTPase family. In terms of assembly, associates with the 50S ribosomal subunit.

In terms of biological role, GTPase that plays an essential role in the late steps of ribosome biogenesis. This chain is GTPase Der, found in Tolumonas auensis (strain DSM 9187 / NBRC 110442 / TA 4).